The sequence spans 293 residues: 4-diphosphocytidyl-2-C-methyl-D-erythritol kinase (293 aa).

Lysine 16 is an active-site residue. Residue 99 to 109 participates in ATP binding; the sequence is PMGAGLGGGSS. Aspartate 141 is a catalytic residue.

The protein belongs to the GHMP kinase family. IspE subfamily.

It carries out the reaction 4-CDP-2-C-methyl-D-erythritol + ATP = 4-CDP-2-C-methyl-D-erythritol 2-phosphate + ADP + H(+). The protein operates within isoprenoid biosynthesis; isopentenyl diphosphate biosynthesis via DXP pathway; isopentenyl diphosphate from 1-deoxy-D-xylulose 5-phosphate: step 3/6. Catalyzes the phosphorylation of the position 2 hydroxy group of 4-diphosphocytidyl-2C-methyl-D-erythritol. The sequence is that of 4-diphosphocytidyl-2-C-methyl-D-erythritol kinase from Burkholderia ambifaria (strain MC40-6).